The following is a 658-amino-acid chain: Glycogen debranching enzyme (658 aa).

Asp-336 (nucleophile) is an active-site residue. Glu-371 functions as the Proton donor in the catalytic mechanism. Residues 459–484 form a disordered region; the sequence is EANGEENRDGTNSNYSDNHGKEGLGG.

It belongs to the glycosyl hydrolase 13 family.

It carries out the reaction Hydrolysis of (1-&gt;6)-alpha-D-glucosidic linkages to branches with degrees of polymerization of three or four glucose residues in limit dextrin.. Its pathway is glycan degradation; glycogen degradation. In terms of biological role, removes maltotriose and maltotetraose chains that are attached by 1,6-alpha-linkage to the limit dextrin main chain, generating a debranched limit dextrin. This is Glycogen debranching enzyme from Salmonella paratyphi A (strain ATCC 9150 / SARB42).